We begin with the raw amino-acid sequence, 370 residues long: Putative phosphoserine aminotransferase (370 aa).

Positions Met-1–Ser-22 are disordered. Arg-44 is an L-glutamate binding site. The pyridoxal 5'-phosphate site is built by Phe-102, Thr-148, Asp-170, and Gln-193. N6-(pyridoxal phosphate)lysine is present on Lys-194. Asn-245–Thr-246 lines the pyridoxal 5'-phosphate pocket.

This sequence belongs to the class-V pyridoxal-phosphate-dependent aminotransferase family. SerC subfamily. In terms of assembly, homodimer. Pyridoxal 5'-phosphate is required as a cofactor.

Its subcellular location is the cytoplasm. It catalyses the reaction O-phospho-L-serine + 2-oxoglutarate = 3-phosphooxypyruvate + L-glutamate. The enzyme catalyses 4-(phosphooxy)-L-threonine + 2-oxoglutarate = (R)-3-hydroxy-2-oxo-4-phosphooxybutanoate + L-glutamate. It participates in amino-acid biosynthesis; L-serine biosynthesis; L-serine from 3-phospho-D-glycerate: step 2/3. It functions in the pathway cofactor biosynthesis; pyridoxine 5'-phosphate biosynthesis; pyridoxine 5'-phosphate from D-erythrose 4-phosphate: step 3/5. In terms of biological role, catalyzes the reversible conversion of 3-phosphohydroxypyruvate to phosphoserine and of 3-hydroxy-2-oxo-4-phosphonooxybutanoate to phosphohydroxythreonine. The protein is Putative phosphoserine aminotransferase of Mycobacterium sp. (strain JLS).